The chain runs to 811 residues: N-terminal acetyltransferase B complex subunit arm1 (811 aa).

It belongs to the MDM20/NAA25 family. In terms of assembly, component of the N-terminal acetyltransferase B (NatB) complex.

The protein localises to the cytoplasm. Functionally, non-catalytic subunit of the NatB N-terminal acetyltransferase, which catalyzes acetylation of the amino-terminal methionine residues of all proteins beginning with Met-Asp or Met-Glu and of some proteins beginning with Met-Asn or Met-Met. This Schizosaccharomyces pombe (strain 972 / ATCC 24843) (Fission yeast) protein is N-terminal acetyltransferase B complex subunit arm1 (arm1).